Consider the following 385-residue polypeptide: Transcription factor-like protein DPB (385 aa).

Disordered stretches follow at residues 1–53 and 71–102; these read MTTT…EQTI and DIQG…KTGR. Over residues 22–31 the composition is skewed to polar residues; that stretch reads PSTRSWGTAV. Over residues 32 to 53 the composition is skewed to low complexity; the sequence is SGQSVSTSGSMGSPSSRSEQTI. A DNA-binding region spans residues 101 to 184; the sequence is GRGLRQFSMK…KKEIQWRGLP (84 aa). The short motif at 150–184 is the DEF box element; the sequence is DEKNIRRRVYDALNVLMAMDIISKDKKEIQWRGLP. Positions 185–234 form a coiled coil; that stretch reads RTSLSDIEELKNERLSLRNRIEKKTAYSQELEEQYVGLQNLIQRNEHLYS. Positions 296–385 are disordered; that stretch reads PPQQPNGRNN…IMNSSMKPEN (90 aa). Over residues 300-327 the composition is skewed to polar residues; it reads PNGRNNSQLVCHNFTPENPNKGPSTGPT. The span at 336–349 shows a compositional bias: low complexity; the sequence is HLQSQQHQQHSQLQ. The segment covering 355 to 364 has biased composition (polar residues); that stretch reads ETNNVTSSAD.

The protein belongs to the E2F/DP family. In terms of assembly, heterodimer with non-phosphorylated E2FC. No interaction with phosphorylated E2FC. Interacts preferentially with E2FC, but also with E2FA and E2FB. Interacts with SKP2A. Targeted for proteasomal degradation by the SCF(SKP2A) E3 ubiquitin ligase complex. In terms of processing, phosphorylated. Ubiquitous.

The protein localises to the nucleus. It is found in the cytoplasm. Functionally, involved in the regulation of the G1/S transition. Increases the DNA binding activity of E2F proteins after heterodimerization. The complex DPB/E2FC restricts cell division and lateral root initiation and may function as a negative regulator of E2F-regulated genes. The interaction with SKP2A is controlled by auxin. The protein is Transcription factor-like protein DPB (DPB) of Arabidopsis thaliana (Mouse-ear cress).